A 248-amino-acid polypeptide reads, in one-letter code: Granulin (248 aa).

Belongs to the polyhedrin family.

Component of the virus occlusion bodies, which are large proteinaceous structures, that protect the virus from the outside environment for extended periods until they are ingested by insect larvae. The chain is Granulin from Adoxophyes orana granulovirus (AoGV).